A 280-amino-acid chain; its full sequence is Energy-coupling factor transporter ATP-binding protein EcfA2 (280 aa).

Positions 3 to 245 (INLQNVSYTY…VSLLEKKQLG (243 aa)) constitute an ABC transporter domain. 40-47 (GHTGSGKS) lines the ATP pocket.

It belongs to the ABC transporter superfamily. Energy-coupling factor EcfA family. In terms of assembly, forms a stable energy-coupling factor (ECF) transporter complex composed of 2 membrane-embedded substrate-binding proteins (S component), 2 ATP-binding proteins (A component) and 2 transmembrane proteins (T component).

Its subcellular location is the cell membrane. Functionally, ATP-binding (A) component of a common energy-coupling factor (ECF) ABC-transporter complex. Unlike classic ABC transporters this ECF transporter provides the energy necessary to transport a number of different substrates. In Streptococcus pyogenes serotype M1, this protein is Energy-coupling factor transporter ATP-binding protein EcfA2.